Consider the following 391-residue polypeptide: Arginine biosynthesis bifunctional protein ArgJ (391 aa).

Positions 149, 172, 183, 263, 386, and 391 each coordinate substrate. T183 functions as the Nucleophile in the catalytic mechanism.

Belongs to the ArgJ family. Heterotetramer of two alpha and two beta chains.

Its subcellular location is the cytoplasm. It catalyses the reaction N(2)-acetyl-L-ornithine + L-glutamate = N-acetyl-L-glutamate + L-ornithine. The catalysed reaction is L-glutamate + acetyl-CoA = N-acetyl-L-glutamate + CoA + H(+). It functions in the pathway amino-acid biosynthesis; L-arginine biosynthesis; L-ornithine and N-acetyl-L-glutamate from L-glutamate and N(2)-acetyl-L-ornithine (cyclic): step 1/1. It participates in amino-acid biosynthesis; L-arginine biosynthesis; N(2)-acetyl-L-ornithine from L-glutamate: step 1/4. Catalyzes two activities which are involved in the cyclic version of arginine biosynthesis: the synthesis of N-acetylglutamate from glutamate and acetyl-CoA as the acetyl donor, and of ornithine by transacetylation between N(2)-acetylornithine and glutamate. In Bifidobacterium longum (strain NCC 2705), this protein is Arginine biosynthesis bifunctional protein ArgJ.